A 449-amino-acid polypeptide reads, in one-letter code: Probable multidrug resistance protein NorM (449 aa).

Helical transmembrane passes span 17–39 (LMWPILITQFAQAGLGLIDTIMA), 54–76 (VGLWMPVMLLFSAIMIATTPLVA), 97–119 (VAVSLGVIAMLILQLMPFLLPIL), 129–151 (AGLFLHAIGFGMPAVTMYAALRG), 164–186 (VISLLALVVLVPLNYIFMYGIGP), 196–215 (GFATAILQWLMLITLASYIY), 243–265 (LGLPIGLAVFFEVSIFSTGAIVL), 280–302 (MSVTSQLFMIPMSLAIALTIRVG), 315–337 (LVQKLGLATATFFAMCTMSLIWF), 352–369 (VFDIALYLLLFAMAYQLM), 390–412 (MWITLIAYWVVAFPVGTYLARVA), and 417–439 (AGVWLGLITGLSIACVLLLMRLY).

Belongs to the multi antimicrobial extrusion (MATE) (TC 2.A.66.1) family.

Its subcellular location is the cell inner membrane. Multidrug efflux pump. This chain is Probable multidrug resistance protein NorM (norM), found in Acinetobacter baylyi (strain ATCC 33305 / BD413 / ADP1).